The primary structure comprises 249 residues: Enolase-phosphatase E1 (249 aa).

It belongs to the HAD-like hydrolase superfamily. MasA/MtnC family. Monomer. Mg(2+) is required as a cofactor.

It catalyses the reaction 5-methylsulfanyl-2,3-dioxopentyl phosphate + H2O = 1,2-dihydroxy-5-(methylsulfanyl)pent-1-en-3-one + phosphate. Its pathway is amino-acid biosynthesis; L-methionine biosynthesis via salvage pathway; L-methionine from S-methyl-5-thio-alpha-D-ribose 1-phosphate: step 3/6. The protein operates within amino-acid biosynthesis; L-methionine biosynthesis via salvage pathway; L-methionine from S-methyl-5-thio-alpha-D-ribose 1-phosphate: step 4/6. Functionally, bifunctional enzyme that catalyzes the enolization of 2,3-diketo-5-methylthiopentyl-1-phosphate (DK-MTP-1-P) into the intermediate 2-hydroxy-3-keto-5-methylthiopentenyl-1-phosphate (HK-MTPenyl-1-P), which is then dephosphorylated to form the acireductone 1,2-dihydroxy-3-keto-5-methylthiopentene (DHK-MTPene). The sequence is that of Enolase-phosphatase E1 from Synechococcus sp. (strain CC9605).